A 56-amino-acid chain; its full sequence is Male determiner protein Yob (56 aa).

Male determiner protein (M-factor) that controls male somatic sexual differentiation. Acts as a dominant factor that regulates the mRNA splicing of doublesex (dsx) transcripts and promotes expression of male splice forms of dsx. The sequence is that of Male determiner protein Yob from Anopheles gambiae (African malaria mosquito).